A 376-amino-acid chain; its full sequence is Chaperone protein DnaJ 2 (376 aa).

One can recognise a J domain in the interval 8 to 72; the sequence is DYYEILGVPR…EKRKLYDMYG (65 aa). Residues 143–219 form a CR-type zinc finger; the sequence is GTTVPIEVER…CTGRGYGLVK (77 aa). 8 residues coordinate Zn(2+): cysteine 156, cysteine 159, cysteine 172, cysteine 175, cysteine 194, cysteine 197, cysteine 207, and cysteine 210. CXXCXGXG motif repeat units follow at residues 156-163, 172-179, 194-201, and 207-214; these read CSACGGTG, CPTCGGRG, CPTCGGEG, and CHACTGRG.

Belongs to the DnaJ family. Homodimer. Zn(2+) serves as cofactor.

It localises to the cytoplasm. Functionally, participates actively in the response to hyperosmotic and heat shock by preventing the aggregation of stress-denatured proteins and by disaggregating proteins, also in an autonomous, DnaK-independent fashion. Unfolded proteins bind initially to DnaJ; upon interaction with the DnaJ-bound protein, DnaK hydrolyzes its bound ATP, resulting in the formation of a stable complex. GrpE releases ADP from DnaK; ATP binding to DnaK triggers the release of the substrate protein, thus completing the reaction cycle. Several rounds of ATP-dependent interactions between DnaJ, DnaK and GrpE are required for fully efficient folding. Also involved, together with DnaK and GrpE, in the DNA replication of plasmids through activation of initiation proteins. The protein is Chaperone protein DnaJ 2 of Aquifex aeolicus (strain VF5).